The chain runs to 99 residues: Small ribosomal subunit protein uS17 (99 aa).

Belongs to the universal ribosomal protein uS17 family. In terms of assembly, part of the 30S ribosomal subunit.

In terms of biological role, one of the primary rRNA binding proteins, it binds specifically to the 5'-end of 16S ribosomal RNA. The chain is Small ribosomal subunit protein uS17 from Thermosipho africanus (strain TCF52B).